The following is a 218-amino-acid chain: MIIAIDGPSASGKSSVSKALSMKLGFKFISSGYLYRIITLIAQRFTLNEYDLLNESKLVDLISQNDIKYNDNSFLLNGVDVISHILTEKIDFQVSLYSSYVNIRKIVNKKLREIVKIQDDDYIIEGRDITTVVFPEAKIKIYLDASVEVRTLRRYNQRDDDMALIELEQALEKRDEIDQNKEYGKLKLGKGVFYIDTSYKSLDDVCDIIIKTFNLKKK.

7-15 (GPSASGKSS) serves as a coordination point for ATP.

The protein belongs to the cytidylate kinase family. Type 1 subfamily.

The protein resides in the cytoplasm. It carries out the reaction CMP + ATP = CDP + ADP. It catalyses the reaction dCMP + ATP = dCDP + ADP. The chain is Cytidylate kinase from Borrelia duttonii (strain Ly).